We begin with the raw amino-acid sequence, 858 residues long: Ubiquitin carboxyl-terminal hydrolase 13 (858 aa).

Ser-112 bears the Phosphoserine mark. The UBP-type; degenerate zinc-finger motif lies at 185–293 (PVSKYANNLV…KHLAHFGIDM (109 aa)). Cys-209, Cys-212, Cys-229, and His-242 together coordinate Zn(2+). Lys-309 participates in a covalent cross-link: Glycyl lysine isopeptide (Lys-Gly) (interchain with G-Cter in SUMO2). Residues 334–856 (TGLKNLGNSC…LGYMYFYRRI (523 aa)) form the USP domain. The Nucleophile role is filled by Cys-343. Residue Lys-403 forms a Glycyl lysine isopeptide (Lys-Gly) (interchain with G-Cter in SUMO2) linkage. 2 UBA domains span residues 650 to 691 (DIDE…IIVH) and 722 to 762 (QPPE…IFSH). Residue His-818 is the Proton acceptor of the active site.

Belongs to the peptidase C19 family. As to quaternary structure, interacts with UFD1. Interacts (via UBA domains) with SIAH2 (when ubiquitinated). Interacts with BAG6; the interaction is direct and may mediate UBL4A deubiquitination. Interacts (via UBA 2 domain) with AMFR; the interaction is direct. Interacts with UBL4A; may be indirect via BAG6. Interacts with NEDD4.

The protein resides in the cytoplasm. It catalyses the reaction Thiol-dependent hydrolysis of ester, thioester, amide, peptide and isopeptide bonds formed by the C-terminal Gly of ubiquitin (a 76-residue protein attached to proteins as an intracellular targeting signal).. Specifically inhibited by spautin-1 (specific and potent autophagy inhibitor-1), a derivative of MBCQ that binds to USP13 and inhibits deubiquitinase activity. Regulated by PIK3C3/VPS34-containing complexes. The weak deubiquitinase activity in vitro suggests the existence of some mechanism that activates the enzyme. Its function is as follows. Deubiquitinase that mediates deubiquitination of target proteins such as BECN1, MITF, SKP2 and USP10 and is involved in various processes such as autophagy, endoplasmic reticulum-associated degradation (ERAD), cell cycle progression or DNA damage response. Component of a regulatory loop that controls autophagy and p53/TP53 levels: mediates deubiquitination of BECN1, a key regulator of autophagy, leading to stabilize the PIK3C3/VPS34-containing complexes. Alternatively, forms with NEDD4 a deubiquitination complex, which subsequently stabilizes VPS34 to promote autophagy. Also deubiquitinates USP10, an essential regulator of p53/TP53 stability. In turn, PIK3C3/VPS34-containing complexes regulate USP13 stability, suggesting the existence of a regulatory system by which PIK3C3/VPS34-containing complexes regulate p53/TP53 protein levels via USP10 and USP13. Recruited by nuclear UFD1 and mediates deubiquitination of SKP2, thereby regulating endoplasmic reticulum-associated degradation (ERAD). Also regulates ERAD through the deubiquitination of UBL4A a component of the BAG6/BAT3 complex. Mediates stabilization of SIAH2 independently of deubiquitinase activity: binds ubiquitinated SIAH2 and acts by impairing SIAH2 autoubiquitination. Regulates the cell cycle progression by stabilizing cell cycle proteins such as SKP2 and AURKB. In addition, plays an important role in maintaining genomic stability and in DNA replication checkpoint activation via regulation of RAP80 and TOPBP1. Deubiquitinates the multifunctional protein HMGB1 and subsequently drives its nucleocytoplasmic localization and its secretion. Positively regulates type I and type II interferon signalings by deubiquitinating STAT1 but negatively regulates antiviral response by deubiquitinating STING1. The protein is Ubiquitin carboxyl-terminal hydrolase 13 (Usp13) of Mus musculus (Mouse).